Reading from the N-terminus, the 272-residue chain is Indole-3-glycerol phosphate synthase (272 aa).

This sequence belongs to the TrpC family.

The enzyme catalyses 1-(2-carboxyphenylamino)-1-deoxy-D-ribulose 5-phosphate + H(+) = (1S,2R)-1-C-(indol-3-yl)glycerol 3-phosphate + CO2 + H2O. Its pathway is amino-acid biosynthesis; L-tryptophan biosynthesis; L-tryptophan from chorismate: step 4/5. In Mycobacterium sp. (strain JLS), this protein is Indole-3-glycerol phosphate synthase.